The chain runs to 336 residues: F-box protein PP2-B1 (336 aa).

Residues 1–22 form a disordered region; sequence MEQIHGGDSNSGGGGGGSSRND. Gly residues predominate over residues 9-18; it reads SNSGGGGGGS. In terms of domain architecture, F-box spans 29-75; sequence ASRFDALPEDCISKVISHTSPRDACVVASVSKSVKSAAQSDLVWEMF.

Part of a SCF (ASK-cullin-F-box) protein ligase complex. Interacts with SKP1A/ASK1 and SPK1B/ASK2.

Its subcellular location is the nucleus. It participates in protein modification; protein ubiquitination. Its function is as follows. Component of SCF(ASK-cullin-F-box) E3 ubiquitin ligase complexes, which may mediate the ubiquitination and subsequent proteasomal degradation of target proteins. The protein is F-box protein PP2-B1 (PP2B1) of Arabidopsis thaliana (Mouse-ear cress).